The following is a 523-amino-acid chain: Mogroside I-A1 synthase (523 aa).

H39 functions as the Proton acceptor in the catalytic mechanism. D136 acts as the Charge relay in catalysis. Residues S311, Q374, W392, N393, S394, E397, D413, and Q414 each coordinate UDP-alpha-D-glucose.

The protein belongs to the UDP-glycosyltransferase family. Highly expressed in young fruits 15 and 34 days after anthesis (15-DAA and 34-DAA).

It catalyses the reaction mogrol + UDP-alpha-D-glucose = mogroside I-A1 + UDP + H(+). It carries out the reaction mogroside I-A1 + UDP-alpha-D-glucose = mogroside IIE + UDP + H(+). The catalysed reaction is mogroside IE + UDP-alpha-D-glucose = mogroside IIE + UDP + H(+). The enzyme catalyses mogroside II-A1 + UDP-alpha-D-glucose = mogroside IIIX + UDP + H(+). It catalyses the reaction mogroside II-A + UDP-alpha-D-glucose = mogroside III + UDP + H(+). It carries out the reaction mogroside IIE + UDP-alpha-D-glucose = mogroside III-C3(1-&gt;6) + UDP + H(+). The catalysed reaction is mogroside III + UDP-alpha-D-glucose = isomogroside IV + UDP + H(+). The enzyme catalyses mogroside III + UDP-alpha-D-glucose = mogroside IV + UDP + H(+). It catalyses the reaction mogroside IIIX + UDP-alpha-D-glucose = mogroside IVA + UDP + H(+). It carries out the reaction siamenoside I + UDP-alpha-D-glucose = isomogroside V + UDP + H(+). It participates in secondary metabolite biosynthesis; terpenoid biosynthesis. Its function is as follows. UDP-glycosyltransferase involved in the biosynthesis of cucurbitacin and mogroside tetracyclic triterpene natural products (e.g. siamenoside I and mogrosides IV, V and VI). Cucurbitacins have cytotoxic properties and exhibit deterrent taste as a defense barrier against herbivores. Mogrosides are nonsugar highly oxygenated compounds used as high-intensity zero-calorie sweeteners; they also possess pharmacological properties such as regulating immunity, lowering blood sugar and lipid levels, protecting the liver, and acting as antioxidants and antitumor agents. Catalyzes the C24 primary glucosylation of mogrol and mogroside I-E1, and the C3 primary glucosylation of mogroside I-A1, mogroside II-A1 and mogroside II-A. Also supports branching glucosylations of mogroside II-E, mogroside III, mogroside IIIx and siamenoside I. The protein is Mogroside I-A1 synthase of Siraitia grosvenorii (Monk's fruit).